The following is a 424-amino-acid chain: tRNA(Ile)-lysidine synthase (424 aa).

Position 26–31 (26–31 (SGGIDS)) interacts with ATP.

This sequence belongs to the tRNA(Ile)-lysidine synthase family.

Its subcellular location is the cytoplasm. It catalyses the reaction cytidine(34) in tRNA(Ile2) + L-lysine + ATP = lysidine(34) in tRNA(Ile2) + AMP + diphosphate + H(+). Functionally, ligates lysine onto the cytidine present at position 34 of the AUA codon-specific tRNA(Ile) that contains the anticodon CAU, in an ATP-dependent manner. Cytidine is converted to lysidine, thus changing the amino acid specificity of the tRNA from methionine to isoleucine. This Streptococcus agalactiae serotype V (strain ATCC BAA-611 / 2603 V/R) protein is tRNA(Ile)-lysidine synthase.